The primary structure comprises 127 residues: Large ribosomal subunit protein bL21c (127 aa).

Belongs to the bacterial ribosomal protein bL21 family. Part of the 50S ribosomal subunit.

Its subcellular location is the plastid. The protein localises to the chloroplast. In terms of biological role, this protein binds to 23S rRNA. The sequence is that of Large ribosomal subunit protein bL21c from Adiantum capillus-veneris (Maidenhair fern).